A 178-amino-acid polypeptide reads, in one-letter code: uncharacterized protein (178 aa).

The signal sequence occupies residues 1 to 19 (MINRKILLTSLLLIFTVLS). Active-site residues include R52, E60, and R94.

This sequence belongs to the thermonuclease family.

This is an uncharacterized protein from Haemophilus influenzae (strain ATCC 51907 / DSM 11121 / KW20 / Rd).